A 414-amino-acid chain; its full sequence is Peptide chain release factor subunit 1 (414 aa).

The protein belongs to the eukaryotic release factor 1 family. Heterodimer of two subunits, one of which binds GTP.

Its subcellular location is the cytoplasm. Directs the termination of nascent peptide synthesis (translation) in response to the termination codons UAA, UAG and UGA. The chain is Peptide chain release factor subunit 1 from Methanococcoides burtonii (strain DSM 6242 / NBRC 107633 / OCM 468 / ACE-M).